The following is a 425-amino-acid chain: Dual-specificity RNA methyltransferase RlmN (425 aa).

The Proton acceptor role is filled by glutamate 136. The Radical SAM core domain maps to 142 to 381; the sequence is GDDRGTLCVS…FTAGYASPVR (240 aa). Cysteine 149 and cysteine 392 are oxidised to a cystine. Residues cysteine 156, cysteine 160, and cysteine 163 each coordinate [4Fe-4S] cluster. S-adenosyl-L-methionine is bound by residues 218-219, serine 250, 272-274, and asparagine 349; these read GE and SLH. Cysteine 392 (S-methylcysteine intermediate) is an active-site residue.

The protein belongs to the radical SAM superfamily. RlmN family. [4Fe-4S] cluster is required as a cofactor.

The protein resides in the cytoplasm. The catalysed reaction is adenosine(2503) in 23S rRNA + 2 reduced [2Fe-2S]-[ferredoxin] + 2 S-adenosyl-L-methionine = 2-methyladenosine(2503) in 23S rRNA + 5'-deoxyadenosine + L-methionine + 2 oxidized [2Fe-2S]-[ferredoxin] + S-adenosyl-L-homocysteine. It catalyses the reaction adenosine(37) in tRNA + 2 reduced [2Fe-2S]-[ferredoxin] + 2 S-adenosyl-L-methionine = 2-methyladenosine(37) in tRNA + 5'-deoxyadenosine + L-methionine + 2 oxidized [2Fe-2S]-[ferredoxin] + S-adenosyl-L-homocysteine. In terms of biological role, specifically methylates position 2 of adenine 2503 in 23S rRNA and position 2 of adenine 37 in tRNAs. m2A2503 modification seems to play a crucial role in the proofreading step occurring at the peptidyl transferase center and thus would serve to optimize ribosomal fidelity. This chain is Dual-specificity RNA methyltransferase RlmN, found in Methylorubrum extorquens (strain PA1) (Methylobacterium extorquens).